Here is a 569-residue protein sequence, read N- to C-terminus: Proline--tRNA ligase (569 aa).

This sequence belongs to the class-II aminoacyl-tRNA synthetase family. ProS type 1 subfamily. Homodimer.

The protein localises to the cytoplasm. The catalysed reaction is tRNA(Pro) + L-proline + ATP = L-prolyl-tRNA(Pro) + AMP + diphosphate. Catalyzes the attachment of proline to tRNA(Pro) in a two-step reaction: proline is first activated by ATP to form Pro-AMP and then transferred to the acceptor end of tRNA(Pro). As ProRS can inadvertently accommodate and process non-cognate amino acids such as alanine and cysteine, to avoid such errors it has two additional distinct editing activities against alanine. One activity is designated as 'pretransfer' editing and involves the tRNA(Pro)-independent hydrolysis of activated Ala-AMP. The other activity is designated 'posttransfer' editing and involves deacylation of mischarged Ala-tRNA(Pro). The misacylated Cys-tRNA(Pro) is not edited by ProRS. This chain is Proline--tRNA ligase, found in Desulforamulus reducens (strain ATCC BAA-1160 / DSM 100696 / MI-1) (Desulfotomaculum reducens).